Reading from the N-terminus, the 606-residue chain is Putative auxin response factor 21 (606 aa).

Positions 126–228 (FTKVLTASDT…ELRVGIRRAR (103 aa)) form a DNA-binding region, TF-B3. Residues 511–592 (RTCTKVQMQG…MVKKILIYSK (82 aa)) form the PB1 domain.

It belongs to the ARF family. In terms of assembly, homodimers and heterodimers.

Its subcellular location is the nucleus. Auxin response factors (ARFs) are transcriptional factors that bind specifically to the DNA sequence 5'-TGTCTC-3' found in the auxin-responsive promoter elements (AuxREs). Could act as transcriptional activator or repressor. Formation of heterodimers with Aux/IAA proteins may alter their ability to modulate early auxin response genes expression. In Arabidopsis thaliana (Mouse-ear cress), this protein is Putative auxin response factor 21 (ARF21).